The primary structure comprises 457 residues: UDP-N-acetylmuramate--L-alanyl-gamma-D-glutamyl-meso-2,6-diaminoheptandioate ligase (457 aa).

110–116 (GTHGKTT) is a binding site for ATP.

It belongs to the MurCDEF family. Mpl subfamily. Requires Mg(2+) as cofactor.

It is found in the secreted. The enzyme catalyses UDP-N-acetyl-alpha-D-muramate + L-alanyl-gamma-D-glutamyl-meso-2,6-diaminopimelate + ATP = UDP-N-acetyl-alpha-D-muramoyl-L-alanyl-gamma-D-glutamyl-meso-2,6-diaminopimelate + ADP + phosphate + H(+). Its pathway is cell wall biogenesis; peptidoglycan recycling. Its function is as follows. Reutilizes the intact tripeptide L-alanyl-gamma-D-glutamyl-meso-diaminopimelate by linking it to UDP-N-acetylmuramate. The enzyme can also use the tetrapeptide L-alanyl-gamma-D-glutamyl-meso-2,6-diaminoheptanedioyl-D-alanine or the pentapeptide L-alanyl-gamma-D-glutamyl-meso-2,6-diaminoheptandioyl-D-alanyl-D-alanine in vivo and in vitro. In Escherichia coli (strain K12), this protein is UDP-N-acetylmuramate--L-alanyl-gamma-D-glutamyl-meso-2,6-diaminoheptandioate ligase.